We begin with the raw amino-acid sequence, 293 residues long: uncharacterized protein (293 aa).

This is an uncharacterized protein from Treponema pallidum (strain Nichols).